The sequence spans 508 residues: Cobyric acid synthase (508 aa).

The GATase cobBQ-type domain occupies 249 to 451; it reads EVDVAIINLP…IHGIFENSLF (203 aa). Cys330 (nucleophile) is an active-site residue. His443 is an active-site residue.

It belongs to the CobB/CobQ family. CobQ subfamily.

Its pathway is cofactor biosynthesis; adenosylcobalamin biosynthesis. Catalyzes amidations at positions B, D, E, and G on adenosylcobyrinic A,C-diamide. NH(2) groups are provided by glutamine, and one molecule of ATP is hydrogenolyzed for each amidation. The polypeptide is Cobyric acid synthase (Caldanaerobacter subterraneus subsp. tengcongensis (strain DSM 15242 / JCM 11007 / NBRC 100824 / MB4) (Thermoanaerobacter tengcongensis)).